The chain runs to 154 residues: Interleukin-2 (154 aa).

An N-terminal signal peptide occupies residues 1–20 (MYKMQLLCCIALTLALMANG). An O-linked (GalNAc...) threonine glycan is attached at Thr-23. The cysteines at positions 78 and 126 are disulfide-linked.

This sequence belongs to the IL-2 family.

The protein resides in the secreted. Cytokine produced by activated CD4-positive helper T-cells and to a lesser extend activated CD8-positive T-cells and natural killer (NK) cells that plays pivotal roles in the immune response and tolerance. Binds to a receptor complex composed of either the high-affinity trimeric IL-2R (IL2RA/CD25, IL2RB/CD122 and IL2RG/CD132) or the low-affinity dimeric IL-2R (IL2RB and IL2RG). Interaction with the receptor leads to oligomerization and conformation changes in the IL-2R subunits resulting in downstream signaling starting with phosphorylation of JAK1 and JAK3. In turn, JAK1 and JAK3 phosphorylate the receptor to form a docking site leading to the phosphorylation of several substrates including STAT5. This process leads to activation of several pathways including STAT, phosphoinositide-3-kinase/PI3K and mitogen-activated protein kinase/MAPK pathways. Functions as a T-cell growth factor and can increase NK-cell cytolytic activity as well. Promotes strong proliferation of activated B-cells and subsequently immunoglobulin production. Plays a pivotal role in regulating the adaptive immune system by controlling the survival and proliferation of regulatory T-cells, which are required for the maintenance of immune tolerance. Moreover, participates in the differentiation and homeostasis of effector T-cell subsets, including Th1, Th2, Th17 as well as memory CD8-positive T-cells. This Sus scrofa (Pig) protein is Interleukin-2 (IL2).